A 410-amino-acid polypeptide reads, in one-letter code: Elongation factor Tu (410 aa).

Residues 10–219 form the tr-type G domain; sequence KTHVNVGTIG…ALDTYIPDPV (210 aa). GTP-binding positions include 19 to 26, 88 to 92, and 143 to 146; these read GHVDHGKT, DCPGH, and NKCD. Threonine 26 is a Mg(2+) binding site.

Belongs to the TRAFAC class translation factor GTPase superfamily. Classic translation factor GTPase family. EF-Tu/EF-1A subfamily. As to quaternary structure, monomer.

Its subcellular location is the cytoplasm. The catalysed reaction is GTP + H2O = GDP + phosphate + H(+). Its function is as follows. GTP hydrolase that promotes the GTP-dependent binding of aminoacyl-tRNA to the A-site of ribosomes during protein biosynthesis. The protein is Elongation factor Tu of Brachyspira hyodysenteriae (Treponema hyodysenteriae).